We begin with the raw amino-acid sequence, 461 residues long: Elongation factor 1-alpha (461 aa).

N,N,N-trimethylglycine is present on glycine 2. Lysine 3 is modified (N6,N6-dimethyllysine; alternate). Position 3 is an N6-methyllysine; alternate (lysine 3). The 236-residue stretch at lysine 6 to threonine 241 folds into the tr-type G domain. The segment at glycine 15–serine 22 is G1. A GTP-binding site is contributed by glycine 15 to serine 22. N6-methyllysine is present on lysine 31. Residues glycine 71–aspartate 75 form a G2 region. N6,N6,N6-trimethyllysine is present on lysine 80. A G3 region spans residues aspartate 92–glycine 95. GTP-binding positions include aspartate 92–histidine 96 and asparagine 154–aspartate 157. Positions asparagine 154–aspartate 157 are G4. The segment at serine 193–phenylalanine 195 is G5. Position 317 is an N6,N6-dimethyllysine; alternate (lysine 317). Position 317 is an N6-methyllysine; alternate (lysine 317). Lysine 391 carries the N6-methyllysine modification.

This sequence belongs to the TRAFAC class translation factor GTPase superfamily. Classic translation factor GTPase family. EF-Tu/EF-1A subfamily.

It localises to the cytoplasm. In terms of biological role, this protein promotes the GTP-dependent binding of aminoacyl-tRNA to the A-site of ribosomes during protein biosynthesis. The polypeptide is Elongation factor 1-alpha (TEF) (Pseudoechria curvicolla (Podospora curvicolla)).